The following is a 497-amino-acid chain: Probable cytosol aminopeptidase (497 aa).

Mn(2+) is bound by residues lysine 264 and aspartate 269. Lysine 276 is an active-site residue. Residues aspartate 287, aspartate 347, and glutamate 349 each coordinate Mn(2+). Arginine 351 is a catalytic residue.

Belongs to the peptidase M17 family. Mn(2+) serves as cofactor.

Its subcellular location is the cytoplasm. It carries out the reaction Release of an N-terminal amino acid, Xaa-|-Yaa-, in which Xaa is preferably Leu, but may be other amino acids including Pro although not Arg or Lys, and Yaa may be Pro. Amino acid amides and methyl esters are also readily hydrolyzed, but rates on arylamides are exceedingly low.. The catalysed reaction is Release of an N-terminal amino acid, preferentially leucine, but not glutamic or aspartic acids.. In terms of biological role, presumably involved in the processing and regular turnover of intracellular proteins. Catalyzes the removal of unsubstituted N-terminal amino acids from various peptides. This is Probable cytosol aminopeptidase from Thermosynechococcus vestitus (strain NIES-2133 / IAM M-273 / BP-1).